We begin with the raw amino-acid sequence, 154 residues long: MVDVAFVCLGNICRSPMAEAIMRQRLKDRNIHDIKVHSRGTGSWNLGEPPHEGTQKILNKHNIPFDGMISELFEATDDFDYIVAMDQSNVDNIKSINPNLKGQLFKLLEFSNMEESDVPDPYYTNNFEGVYDMVLSSCDNLIDYIVKDANLKEG.

Cys8 acts as the Nucleophile in catalysis. Arg14 is a catalytic residue. The Proton donor role is filled by Asp120.

The protein belongs to the low molecular weight phosphotyrosine protein phosphatase family. Interacts with host CORO1A. Post-translationally, phosphorylations at Tyr-122 and Tyr-123 are essential for phosphatase activity.

Its subcellular location is the secreted. It carries out the reaction O-phospho-L-tyrosyl-[protein] + H2O = L-tyrosyl-[protein] + phosphate. Secreted tyrosine phosphatase that plays a critical role during infection as a bacterial effector protein that counteracts host defenses. Required for intramacrophage survival. This is Low molecular weight protein-tyrosine-phosphatase PtpA (ptpA) from Staphylococcus aureus (strain MSSA476).